A 602-amino-acid chain; its full sequence is Beta-(1--&gt;2)glucan export ATP-binding/permease protein NdvA (602 aa).

Residues 21-311 (GWVLAGANLL…VVGFVNSVFM (291 aa)) form the ABC transmembrane type-1 domain. The next 6 membrane-spanning stretches (helical) occupy residues 22-42 (WVLA…PVLF), 68-88 (LLLA…AVAL), 146-166 (EHFA…YINW), 167-187 (RLAL…TLVV), 238-258 (LLAM…ITRA), and 285-305 (IVMF…VVGF). Residues 345–579 (VEFDNVSFSY…RGYFAELAHA (235 aa)) form the ABC transporter domain. 378–385 (GATGAGKS) contributes to the ATP binding site.

It belongs to the ABC transporter superfamily. Beta-(1--&gt;2)glucan exporter (TC 3.A.1.108.1) family. As to quaternary structure, homodimer.

The protein resides in the cell inner membrane. It catalyses the reaction [(1-&gt;2)-beta-D-glucosyl](n)(in) + ATP + H2O = [(1-&gt;2)-beta-D-glucosyl](n)(out) + ADP + phosphate + H(+). Involved in Beta-(1--&gt;2)glucan export. Transmembrane domains (TMD) form a pore in the inner membrane and the ATP-binding domain (NBD) is responsible for energy generation. The protein is Beta-(1--&gt;2)glucan export ATP-binding/permease protein NdvA of Rhodopseudomonas palustris (strain BisA53).